Reading from the N-terminus, the 593-residue chain is DNA primase (593 aa).

Residues 38 to 62 form a CHC2-type zinc finger; that stretch reads CPFHQEKTPSFTVSDSKRFFYCFGC. The 83-residue stretch at 250–332 folds into the Toprim domain; sequence NRSILVEGYF…EKKISFIRLP (83 aa). Positions 256, 300, and 302 each coordinate Mg(2+).

It belongs to the DnaG primase family. As to quaternary structure, monomer. Interacts with DnaB. Requires Zn(2+) as cofactor. The cofactor is Mg(2+).

It carries out the reaction ssDNA + n NTP = ssDNA/pppN(pN)n-1 hybrid + (n-1) diphosphate.. RNA polymerase that catalyzes the synthesis of short RNA molecules used as primers for DNA polymerase during DNA replication. The protein is DNA primase of Rickettsia typhi (strain ATCC VR-144 / Wilmington).